Consider the following 327-residue polypeptide: Protoheme IX farnesyltransferase (327 aa).

The next 8 helical transmembrane spans lie at 35–55 (LIPLLLATTLGGMALSEGWPL), 60–80 (LVCTLGGGALASAAAGVLNCL), 106–126 (SAFIGAIACTLAAAMLLVSGV), 129–149 (LAAGLSLLGLCSYVLLYTALL), 157–177 (IVIGGVAGAIPPLVGAAAATG), 185–205 (WLFALVMVWTPAHFWALALLL), 234–254 (GWITVLLSSLGVFALPSGGAF), and 283–303 (AKALFRWSILYLFGVCLLLIL).

Belongs to the UbiA prenyltransferase family. Protoheme IX farnesyltransferase subfamily.

It is found in the cell inner membrane. The enzyme catalyses heme b + (2E,6E)-farnesyl diphosphate + H2O = Fe(II)-heme o + diphosphate. The protein operates within porphyrin-containing compound metabolism; heme O biosynthesis; heme O from protoheme: step 1/1. In terms of biological role, converts heme B (protoheme IX) to heme O by substitution of the vinyl group on carbon 2 of heme B porphyrin ring with a hydroxyethyl farnesyl side group. In Synechococcus sp. (strain CC9605), this protein is Protoheme IX farnesyltransferase.